Here is a 634-residue protein sequence, read N- to C-terminus: DNA gyrase subunit B (634 aa).

The tract at residues 1-220 is ATPase domain; it reads MSYDASAIRV…EEVFLDKGGV (220 aa). Positions 221–390 are transducer domain; the sequence is ASFAKALAEG…EAARKARELV (170 aa). Residues 416–534 enclose the Toprim domain; that stretch reads AELFIVEGDS…RGHVYIAQPP (119 aa). Residues E422, D499, and D501 each coordinate Mg(2+).

The protein belongs to the type II topoisomerase GyrB family. As to quaternary structure, heterotetramer, composed of two GyrA and two GyrB chains. Non-hydrolyzable ATP analogs induce dimerization, novobiocin also induces a small amount of dimerization. The two subunits form an intertwined dimer where the GyrB ATPase transducer helix of 1 subunit connects to the Toprim domain of the other GyrB subunit through a 10 residue linker. In the heterotetramer, GyrA contains the active site tyrosine that forms a covalent intermediate with the DNA, while GyrB binds cofactors and catalyzes ATP hydrolysis. Mg(2+) serves as cofactor. Requires Mn(2+) as cofactor. It depends on Ca(2+) as a cofactor.

Its subcellular location is the cytoplasm. It catalyses the reaction ATP-dependent breakage, passage and rejoining of double-stranded DNA.. A type II topoisomerase that negatively supercoils closed circular double-stranded (ds) DNA in an ATP-dependent manner. It probably also catalyzes the interconversion of other topological isomers of double-stranded DNA rings, including catenanes. Relaxes negatively supercoiled DNA in an ATP-independent manner. At comparable concentrations T.thermophilus gyrase does not introduce as many negative supercoils into DNA as the E.coli enzyme. Functionally, negative supercoiling favors strand separation, and DNA replication, transcription, recombination and repair, all of which involve strand separation. Type II topoisomerases break and join 2 DNA strands simultaneously in an ATP-dependent manner. This is DNA gyrase subunit B from Thermus thermophilus (strain ATCC 27634 / DSM 579 / HB8).